The following is a 70-amino-acid chain: ATP synthase subunit c (70 aa).

2 helical membrane-spanning segments follow: residues 4-24 (IAAGIAMAGAAIGGGVGDGIV) and 47-67 (FIGVGLVEAMPIIAFVVALMV).

The protein belongs to the ATPase C chain family. As to quaternary structure, F-type ATPases have 2 components, F(1) - the catalytic core - and F(0) - the membrane proton channel. F(1) has five subunits: alpha(3), beta(3), gamma(1), delta(1), epsilon(1). F(0) has three main subunits: a(1), b(2) and c(10-14). The alpha and beta chains form an alternating ring which encloses part of the gamma chain. F(1) is attached to F(0) by a central stalk formed by the gamma and epsilon chains, while a peripheral stalk is formed by the delta and b chains.

It is found in the cell membrane. Its function is as follows. F(1)F(0) ATP synthase produces ATP from ADP in the presence of a proton or sodium gradient. F-type ATPases consist of two structural domains, F(1) containing the extramembraneous catalytic core and F(0) containing the membrane proton channel, linked together by a central stalk and a peripheral stalk. During catalysis, ATP synthesis in the catalytic domain of F(1) is coupled via a rotary mechanism of the central stalk subunits to proton translocation. In terms of biological role, key component of the F(0) channel; it plays a direct role in translocation across the membrane. A homomeric c-ring of between 10-14 subunits forms the central stalk rotor element with the F(1) delta and epsilon subunits. This Levilactobacillus brevis (strain ATCC 367 / BCRC 12310 / CIP 105137 / JCM 1170 / LMG 11437 / NCIMB 947 / NCTC 947) (Lactobacillus brevis) protein is ATP synthase subunit c.